We begin with the raw amino-acid sequence, 230 residues long: Pyridoxal phosphate homeostasis protein (230 aa).

N6-(pyridoxal phosphate)lysine is present on K36.

The protein belongs to the pyridoxal phosphate-binding protein YggS/PROSC family.

Functionally, perhaps involved in proline biosynthesis. In terms of biological role, pyridoxal 5'-phosphate (PLP)-binding protein, which is involved in PLP homeostasis. In Pseudomonas aeruginosa (strain ATCC 15692 / DSM 22644 / CIP 104116 / JCM 14847 / LMG 12228 / 1C / PRS 101 / PAO1), this protein is Pyridoxal phosphate homeostasis protein.